Consider the following 130-residue polypeptide: Small ribosomal subunit protein uS9 (130 aa).

Residues 109–130 (RVKERKKYGQKGARAKFQFSKR) are disordered.

The protein belongs to the universal ribosomal protein uS9 family.

The chain is Small ribosomal subunit protein uS9 from Desulfotalea psychrophila (strain LSv54 / DSM 12343).